The chain runs to 303 residues: Putative S-adenosyl-L-methionine-dependent methyltransferase MAP_4197c (303 aa).

S-adenosyl-L-methionine contacts are provided by residues aspartate 129 and 158–159; that span reads DL.

Belongs to the UPF0677 family.

In terms of biological role, exhibits S-adenosyl-L-methionine-dependent methyltransferase activity. In Mycolicibacterium paratuberculosis (strain ATCC BAA-968 / K-10) (Mycobacterium paratuberculosis), this protein is Putative S-adenosyl-L-methionine-dependent methyltransferase MAP_4197c.